We begin with the raw amino-acid sequence, 470 residues long: Zinc finger and BTB domain-containing protein 8A.1-A (470 aa).

In terms of domain architecture, BTB spans 24–92; that stretch reads CDCHIIVEGQ…VYSGKLPLSG (69 aa). The disordered stretch occupies residues 260–280; it reads EDEDAASHSWPESPQQESLDQ. Over residues 269 to 278 the composition is skewed to polar residues; that stretch reads WPESPQQESL. C2H2-type zinc fingers lie at residues 316 to 338 and 344 to 367; these read FKCP…LRCH and YPCE…QTIH. The span at 439–450 shows a compositional bias: basic and acidic residues; the sequence is GRKENGSERAES. Residues 439 to 470 are disordered; that stretch reads GRKENGSERAESDLAIQEVVDSEDDELKEKQD.

The protein localises to the nucleus. In terms of biological role, may be involved in transcriptional regulation. This chain is Zinc finger and BTB domain-containing protein 8A.1-A (zbtb8a.1-a), found in Xenopus laevis (African clawed frog).